Reading from the N-terminus, the 255-residue chain is tRNA (guanine-N(1)-)-methyltransferase (255 aa).

Residues glycine 113 and isoleucine 133–leucine 138 each bind S-adenosyl-L-methionine.

It belongs to the RNA methyltransferase TrmD family. Homodimer.

It is found in the cytoplasm. It carries out the reaction guanosine(37) in tRNA + S-adenosyl-L-methionine = N(1)-methylguanosine(37) in tRNA + S-adenosyl-L-homocysteine + H(+). Specifically methylates guanosine-37 in various tRNAs. This chain is tRNA (guanine-N(1)-)-methyltransferase, found in Salmonella schwarzengrund (strain CVM19633).